The chain runs to 151 residues: Superoxide dismutase [Cu-Zn] 4 (151 aa).

3 residues coordinate Cu cation: His-45, His-47, and His-62. Cys-56 and Cys-145 are oxidised to a cystine. Zn(2+) is bound by residues His-62, His-70, His-79, and Asp-82. Residue His-120 participates in Cu cation binding.

It belongs to the Cu-Zn superoxide dismutase family. Homodimer. The cofactor is Cu cation. It depends on Zn(2+) as a cofactor.

It localises to the cytoplasm. The catalysed reaction is 2 superoxide + 2 H(+) = H2O2 + O2. In terms of biological role, destroys radicals which are normally produced within the cells and which are toxic to biological systems. Protects spores from cellular damage caused by UV LIGHT. This is Superoxide dismutase [Cu-Zn] 4 (sodD) from Dictyostelium discoideum (Social amoeba).